The sequence spans 578 residues: DNA primase (578 aa).

A CHC2-type zinc finger spans residues 40–64 (CPFHQEKTPSFTVNFEKQFYFCFGC). A Toprim domain is found at 257–339 (KQILIVEGYV…GKNVKFIFLP (83 aa)). Mg(2+)-binding residues include Glu263, Asp307, and Asp309.

This sequence belongs to the DnaG primase family. In terms of assembly, monomer. Interacts with DnaB. Requires Zn(2+) as cofactor. The cofactor is Mg(2+).

It catalyses the reaction ssDNA + n NTP = ssDNA/pppN(pN)n-1 hybrid + (n-1) diphosphate.. Functionally, RNA polymerase that catalyzes the synthesis of short RNA molecules used as primers for DNA polymerase during DNA replication. This is DNA primase from Buchnera aphidicola subsp. Baizongia pistaciae (strain Bp).